The following is a 159-amino-acid chain: Transcription elongation factor GreA (159 aa).

Positions 47-73 (AEYDAAREEQSLTEAHIADLENKLSTA) form a coiled coil.

It belongs to the GreA/GreB family.

Functionally, necessary for efficient RNA polymerase transcription elongation past template-encoded arresting sites. The arresting sites in DNA have the property of trapping a certain fraction of elongating RNA polymerases that pass through, resulting in locked ternary complexes. Cleavage of the nascent transcript by cleavage factors such as GreA or GreB allows the resumption of elongation from the new 3'terminus. GreA releases sequences of 2 to 3 nucleotides. The polypeptide is Transcription elongation factor GreA (Chlorobium phaeobacteroides (strain DSM 266 / SMG 266 / 2430)).